A 156-amino-acid polypeptide reads, in one-letter code: Ribonuclease H (156 aa).

Residues 1 to 142 enclose the RNase H type-1 domain; sequence MGKQVEIFTD…CDELARAAAN (142 aa). The Mg(2+) site is built by Asp-10, Glu-48, Asp-70, and Asp-134.

This sequence belongs to the RNase H family. As to quaternary structure, monomer. It depends on Mg(2+) as a cofactor.

The protein resides in the cytoplasm. It catalyses the reaction Endonucleolytic cleavage to 5'-phosphomonoester.. In terms of biological role, endonuclease that specifically degrades the RNA of RNA-DNA hybrids. In Photorhabdus luminescens (Xenorhabdus luminescens), this protein is Ribonuclease H.